The sequence spans 102 residues: Cytochrome c3 (102 aa).

16 residues coordinate heme c: H26, H29, C34, C37, H38, H39, C50, C55, H56, H73, C81, C84, H85, C95, C98, and H99.

Requires heme as cofactor.

It is found in the periplasm. Functionally, participates in sulfate respiration coupled with phosphorylation by transferring electrons from the enzyme dehydrogenase to ferredoxin. In Desulfovibrio desulfuricans, this protein is Cytochrome c3.